Reading from the N-terminus, the 131-residue chain is Colicin-N immunity protein (131 aa).

2 consecutive transmembrane segments (helical) span residues 66–84 (ILTP…FLLT) and 104–124 (VFVF…IFVL).

Its subcellular location is the cell membrane. This Escherichia coli protein is Colicin-N immunity protein (cni).